The chain runs to 316 residues: PAK4-inhibitor inka1 (316 aa).

Positions 108 to 130 are disordered; that stretch reads YSEVSGSSLRGEEDDIVEEESET. A compositionally biased stretch (acidic residues) spans 119 to 128; that stretch reads EEDDIVEEES. 2 inka box regions span residues 182-219 and 289-316; these read DSQD…DLPE and SDIA…AGFL.

It belongs to the INKA family. In terms of assembly, interacts with pak4/pak5.

It localises to the nucleus. Its subcellular location is the cytoplasm. In terms of biological role, inhibitor of the serine/threonine-protein kinase pak4/pak5. Acts by binding pak4/pak5 in a substrate-like manner, inhibiting the protein kinase activity. Required for the proper migration of neural crest cells during embryonic development, probably by inhibiting pak4/pak5. The protein is PAK4-inhibitor inka1 of Xenopus laevis (African clawed frog).